We begin with the raw amino-acid sequence, 312 residues long: Mevalonate kinase (312 aa).

Position 104 to 114 (104 to 114 (PISCGLGSSAS)) interacts with ATP. Asp-155 acts as the Proton acceptor in catalysis.

It belongs to the GHMP kinase family. Mevalonate kinase subfamily. Homodimer. Mg(2+) serves as cofactor.

It localises to the cytoplasm. It catalyses the reaction (R)-mevalonate + ATP = (R)-5-phosphomevalonate + ADP + H(+). It participates in isoprenoid biosynthesis; isopentenyl diphosphate biosynthesis via mevalonate pathway; isopentenyl diphosphate from (R)-mevalonate: step 1/3. Farnesyl- and geranyl-pyrophosphates are competitive inhibitors. Slightly inhibited by high concentration of ATP. Its function is as follows. Catalyzes the phosphorylation of (R)-mevalonate (MVA) to (R)-mevalonate 5-phosphate (MVAP). Functions in the mevalonate (MVA) pathway leading to isopentenyl diphosphate (IPP), a key precursor for the biosynthesis of isoprenoid compounds such as archaeal membrane lipids. The protein is Mevalonate kinase of Methanocaldococcus jannaschii (strain ATCC 43067 / DSM 2661 / JAL-1 / JCM 10045 / NBRC 100440) (Methanococcus jannaschii).